The sequence spans 490 residues: GTPase Der (490 aa).

EngA-type G domains follow at residues Pro-3–Leu-166 and Ile-203–Thr-376. GTP-binding positions include Gly-9–Ser-16, Asp-56–Ile-60, Asn-118–Asp-121, Gly-209–Ser-216, Asp-256–Val-260, and Asn-321–Asp-324. Positions Arg-377–Glu-461 constitute a KH-like domain.

This sequence belongs to the TRAFAC class TrmE-Era-EngA-EngB-Septin-like GTPase superfamily. EngA (Der) GTPase family. As to quaternary structure, associates with the 50S ribosomal subunit.

GTPase that plays an essential role in the late steps of ribosome biogenesis. The polypeptide is GTPase Der (Escherichia fergusonii (strain ATCC 35469 / DSM 13698 / CCUG 18766 / IAM 14443 / JCM 21226 / LMG 7866 / NBRC 102419 / NCTC 12128 / CDC 0568-73)).